Reading from the N-terminus, the 164-residue chain is Crossover junction endodeoxyribonuclease RuvC (164 aa).

Residues D7, E67, and D140 contribute to the active site. Mg(2+) is bound by residues D7, E67, and D140.

It belongs to the RuvC family. In terms of assembly, homodimer which binds Holliday junction (HJ) DNA. The HJ becomes 2-fold symmetrical on binding to RuvC with unstacked arms; it has a different conformation from HJ DNA in complex with RuvA. In the full resolvosome a probable DNA-RuvA(4)-RuvB(12)-RuvC(2) complex forms which resolves the HJ. Requires Mg(2+) as cofactor.

Its subcellular location is the cytoplasm. It catalyses the reaction Endonucleolytic cleavage at a junction such as a reciprocal single-stranded crossover between two homologous DNA duplexes (Holliday junction).. The RuvA-RuvB-RuvC complex processes Holliday junction (HJ) DNA during genetic recombination and DNA repair. Endonuclease that resolves HJ intermediates. Cleaves cruciform DNA by making single-stranded nicks across the HJ at symmetrical positions within the homologous arms, yielding a 5'-phosphate and a 3'-hydroxyl group; requires a central core of homology in the junction. The consensus cleavage sequence is 5'-(A/T)TT(C/G)-3'. Cleavage occurs on the 3'-side of the TT dinucleotide at the point of strand exchange. HJ branch migration catalyzed by RuvA-RuvB allows RuvC to scan DNA until it finds its consensus sequence, where it cleaves and resolves the cruciform DNA. In Chloroflexus aurantiacus (strain ATCC 29364 / DSM 637 / Y-400-fl), this protein is Crossover junction endodeoxyribonuclease RuvC.